A 390-amino-acid chain; its full sequence is NADH-quinone oxidoreductase subunit D (390 aa).

This sequence belongs to the complex I 49 kDa subunit family. As to quaternary structure, NDH-1 is composed of 14 different subunits. Subunits NuoB, C, D, E, F, and G constitute the peripheral sector of the complex.

Its subcellular location is the cell inner membrane. The catalysed reaction is a quinone + NADH + 5 H(+)(in) = a quinol + NAD(+) + 4 H(+)(out). NDH-1 shuttles electrons from NADH, via FMN and iron-sulfur (Fe-S) centers, to quinones in the respiratory chain. The immediate electron acceptor for the enzyme in this species is believed to be ubiquinone. Couples the redox reaction to proton translocation (for every two electrons transferred, four hydrogen ions are translocated across the cytoplasmic membrane), and thus conserves the redox energy in a proton gradient. This Trichlorobacter lovleyi (strain ATCC BAA-1151 / DSM 17278 / SZ) (Geobacter lovleyi) protein is NADH-quinone oxidoreductase subunit D.